The sequence spans 472 residues: MAFCSPAMMNYNIASNFGDSESASVRQTSSPSLLWSAPGHLSPLTLHCQLSLLYAEQPKSPWCEARPLEPVLPVSRETLKRKTNGSDCTSPIASNPGSKRDAHFCAVCSDYASGYHYGVWSCEGCKAFFKRSIQGHNDYICPATNQCTIDKNRRKSCQACRLRKCYEVGMMKCGSRRERCGYRILRRHRNSEDCMGKTKKYNEAATRVKEILLSTVSPEQFVLTLLEAEPPNVLVSRPSKPFTEASMMMSLTKLADKELVHMIGWAKKIPGFIDLSLYDQVRLLESCWLEVLMIGLMWRSIDHPGKLIFAPDLVLDRDEGKCVEGILEIFDMLLAMTSRFRELKLQHKEYLCVKAMILLNSSMFPLSAEEPESNRKLHHLLNVVTDALVWVIAKSGIPSQQQTTRLANLLMLLSHVRHASNKGMEHLLSMKCKNVVPVYDLLLEMLNAHTLRGQRKSPVTHPDFEQVSHFQV.

Residues 1–104 are modulating; sequence MAFCSPAMMN…NPGSKRDAHF (104 aa). 2 consecutive NR C4-type zinc fingers follow at residues 105–125 and 141–165; these read CAVC…CEGC and CPAT…LRKC. Positions 105-170 form a DNA-binding region, nuclear receptor; the sequence is CAVCSDYASG…RLRKCYEVGM (66 aa). The 233-residue stretch at 217–449 folds into the NR LBD domain; sequence SPEQFVLTLL…DLLLEMLNAH (233 aa).

It belongs to the nuclear hormone receptor family. NR3 subfamily. As to quaternary structure, binds DNA as a homodimer. Can form a heterodimer with ER-alpha. In terms of tissue distribution, a high expression is seen in the telencephalon, diencephalon, pituitary, testis and kidneys but little or no expression is seen in the cerebellum, pectoral muscle and adrenal gland.

It is found in the nucleus. Binds estrogens with an affinity similar to that of ER-alpha, and activates expression of reporter genes containing estrogen response elements (ERE) in an estrogen-dependent manner. The protein is Estrogen receptor beta (ESR2) of Coturnix japonica (Japanese quail).